An 87-amino-acid chain; its full sequence is Large ribosomal subunit protein bL31B (87 aa).

Belongs to the bacterial ribosomal protein bL31 family. Type B subfamily. As to quaternary structure, part of the 50S ribosomal subunit.

This chain is Large ribosomal subunit protein bL31B, found in Klebsiella pneumoniae (strain 342).